The primary structure comprises 1668 residues: Chitin synthase chs-2 (1668 aa).

Basic and acidic residues predominate over residues 1–19 (MMNTLDHRPLGRMETMEGK). Positions 1–51 (MMNTLDHRPLGRMETMEGKPDEDEVPTSSNSDAKGKGYYYSSGTVPTDDST) are disordered. Over 1–116 (MMNTLDHRPL…HGFWHDASLQ (116 aa)) the chain is Cytoplasmic. Residues 117 to 137 (VLKLATFLVLFLLTLGSAVVA) form a helical membrane-spanning segment. Over 138–176 (KSTFILMTSAIGWGGQTITICNQVISEATQNTVKLKNAH) the chain is Extracellular. Residues 177 to 197 (VVKWVWATLLALSAPEALCFV) form a helical membrane-spanning segment. Residues 198 to 212 (RSMHRTMFRNVKRPT) are Cytoplasmic-facing. The chain crosses the membrane as a helical span at residues 213–233 (FIQFVFVLIIETFHSIGVGIL). The Extracellular segment spans residues 234-242 (VFRIFPDLD). Residues 243–263 (AVTAAQLTNAMCFVPAILSVI) traverse the membrane as a helical segment. The Cytoplasmic portion of the chain corresponds to 264–271 (SRKPNKSA). Residues 272–292 (LLLVIIDFAAIAAQSSGFWAL) form a helical membrane-spanning segment. At 293–301 (PMFLPNLQK) the chain is on the extracellular side. A helical transmembrane segment spans residues 302-322 (HLVAIPVSLTLISLAWWQNFV). Residues 323-347 (HRDSVFPPVRTLAKFAQRLSERRSK) are Cytoplasmic-facing. The helical transmembrane segment at 348–368 (TYAFVSLWKICIYVVCCFLFI) threads the bilayer. Residues 369 to 487 (SSRMKIEDML…IYSNYVERNQ (119 aa)) are Extracellular-facing. N-linked (GlcNAc...) asparagine glycosylation is present at N396. Residues 488–508 (LTMAYDALWLVIFQFGAVFVC) form a helical membrane-spanning segment. Residues 509-522 (YHSSKFACKVMMQR) are Cytoplasmic-facing. The chain crosses the membrane as a helical span at residues 523-543 (MGFALPMALSVPVTVLLLSTN). Residues 544-576 (CRMRQKDSCYGTNVLTVELFWQCNGASMSLADF) lie on the Extracellular side of the membrane. The chain crosses the membrane as a helical span at residues 577–597 (ILTPQTWIWLCWLASQFWITI). The Cytoplasmic segment spans residues 598–1045 (HLWNPKHERL…ISIWYIIYQL (448 aa)). The helical transmembrane segment at 1046–1066 (VMLISSILGPGTIFVMIIGAI) threads the bilayer. Residues 1067-1074 (SISFSIDT) are Extracellular-facing. The helical transmembrane segment at 1075-1095 (LISLVIVSIPVVVFIVVCLTA) threads the bilayer. Topologically, residues 1096–1100 (KPEHQ) are cytoplasmic. A helical membrane pass occupies residues 1101-1121 (LICAQTIGAIFAMLMTAVVVG). The Extracellular portion of the chain corresponds to 1122–1136 (TSLQLQKDGLLSPHS). Residues 1137–1157 (MFTVAVATSFLTAAILHPLEF) form a helical membrane-spanning segment. T1158 is a topological domain (cytoplasmic). The helical transmembrane segment at 1159-1179 (CIIPGTIYFLAIPCMYMLLPI) threads the bilayer. At 1180–1375 (YSVCNMHTVS…RAGLIAIRNS (196 aa)) the chain is on the extracellular side. The segment at 1192-1216 (TREDPRPTEKNTLAKKTPGNLESGD) is disordered. Residues 1280–1335 (QIDKCSEADEDEQAEIEDALEMSNQSHAAKKNQKWKQAQSEAWLADKALKRAEREY) adopt a coiled-coil conformation. N-linked (GlcNAc...) asparagine glycosylation is present at N1303. A helical transmembrane segment spans residues 1376–1396 (HTVYFLMINIVFIISVLVLQI). Residues 1397 to 1440 (HKDCLNIEWPLGPKFNHTVRPCYANHDDNQKEEVWVMTRLQLEP) are Cytoplasmic-facing. A helical membrane pass occupies residues 1441–1461 (IGLVFLIFFVSILVIQFLAML). The Extracellular portion of the chain corresponds to 1462–1668 (CHRFGTLAHI…SSGDVELRRF (207 aa)). The tract at residues 1625–1668 (RLFTAQQDQNSPTSDGNRRKSNSRPWDQPTSSATSSGDVELRRF) is disordered. Composition is skewed to polar residues over residues 1628–1639 (TAQQDQNSPTSD) and 1647–1661 (SRPW…TSSG).

This sequence belongs to the chitin synthase family. Class IV subfamily.

The protein localises to the cell membrane. The enzyme catalyses [(1-&gt;4)-N-acetyl-beta-D-glucosaminyl](n) + UDP-N-acetyl-alpha-D-glucosamine = [(1-&gt;4)-N-acetyl-beta-D-glucosaminyl](n+1) + UDP + H(+). Functionally, may be involved in chitin synthesis in the pharynx during larval development. In Caenorhabditis elegans, this protein is Chitin synthase chs-2.